The primary structure comprises 365 residues: tRNA/tmRNA (uracil-C(5))-methyltransferase (365 aa).

The S-adenosyl-L-methionine site is built by Gln-189, Tyr-217, Asn-222, Glu-238, and Asp-298. The active-site Nucleophile is Cys-323. Catalysis depends on Glu-357, which acts as the Proton acceptor.

Belongs to the class I-like SAM-binding methyltransferase superfamily. RNA M5U methyltransferase family. TrmA subfamily.

The enzyme catalyses uridine(54) in tRNA + S-adenosyl-L-methionine = 5-methyluridine(54) in tRNA + S-adenosyl-L-homocysteine + H(+). It carries out the reaction uridine(341) in tmRNA + S-adenosyl-L-methionine = 5-methyluridine(341) in tmRNA + S-adenosyl-L-homocysteine + H(+). Its function is as follows. Dual-specificity methyltransferase that catalyzes the formation of 5-methyluridine at position 54 (m5U54) in all tRNAs, and that of position 341 (m5U341) in tmRNA (transfer-mRNA). In Shewanella sediminis (strain HAW-EB3), this protein is tRNA/tmRNA (uracil-C(5))-methyltransferase.